A 394-amino-acid polypeptide reads, in one-letter code: Elongation factor Tu (394 aa).

Residues 10-204 (KPHVNIGTIG…AVDSYIPQPV (195 aa)) enclose the tr-type G domain. A G1 region spans residues 19–26 (GHVDHGKT). 19–26 (GHVDHGKT) serves as a coordination point for GTP. Thr-26 serves as a coordination point for Mg(2+). The G2 stretch occupies residues 60–64 (GITIS). The interval 81-84 (DCPG) is G3. Residues 81–85 (DCPGH) and 136–139 (NKVD) contribute to the GTP site. The segment at 136-139 (NKVD) is G4. The G5 stretch occupies residues 174-176 (SAL).

The protein belongs to the TRAFAC class translation factor GTPase superfamily. Classic translation factor GTPase family. EF-Tu/EF-1A subfamily. In terms of assembly, monomer.

The protein resides in the cytoplasm. The catalysed reaction is GTP + H2O = GDP + phosphate + H(+). In terms of biological role, GTP hydrolase that promotes the GTP-dependent binding of aminoacyl-tRNA to the A-site of ribosomes during protein biosynthesis. The sequence is that of Elongation factor Tu from Rickettsia felis (strain ATCC VR-1525 / URRWXCal2) (Rickettsia azadi).